A 508-amino-acid polypeptide reads, in one-letter code: Tyrosine decarboxylase 4 (508 aa).

Residue lysine 318 is modified to N6-(pyridoxal phosphate)lysine.

Belongs to the group II decarboxylase family. As to quaternary structure, homodimer. Requires pyridoxal 5'-phosphate as cofactor.

The enzyme catalyses L-tyrosine + H(+) = tyramine + CO2. The chain is Tyrosine decarboxylase 4 (TYRDC-4) from Petroselinum crispum (Parsley).